We begin with the raw amino-acid sequence, 605 residues long: Apoptosis-inducing factor 3 (605 aa).

Residues 22–45 (KERGKEELSASGKGSPRAYQGNGT) form a disordered region. Residues 70-165 (AAVCHVKDLE…VKIEKEKVYV (96 aa)) form the Rieske domain. 4 residues coordinate [2Fe-2S] cluster: C109, H111, C128, and H131. FAD is bound by residues 201–205 (GAGAA), R235, K240, V270, D467, and W514.

The protein belongs to the FAD-dependent oxidoreductase family. Ubiquitous. Expressed in bone marrow, cerebral cortex, liver, ovary, thymus, thyroid gland and tongue (at protein level).

The protein localises to the mitochondrion. Its function is as follows. Induces apoptosis through a caspase dependent pathway. Reduces mitochondrial membrane potential. The sequence is that of Apoptosis-inducing factor 3 (AIFM3) from Homo sapiens (Human).